The chain runs to 591 residues: DEAD-box ATP-dependent RNA helicase 17 (591 aa).

The Q motif motif lies at 23–52 (CSFTDLGLHPTLCAHLQDKMGFQAPTRIQA). The Helicase ATP-binding domain occupies 55–248 (IPVAMSGQHM…KISLKNPVMI (194 aa)). Position 68–75 (68–75 (AATGTGKT)) interacts with ATP. Residues 181 to 184 (DEAD) carry the DEAD box motif. Residues 293 to 482 (QLVQRYVKVS…SFPVNGQRLH (190 aa)) enclose the Helicase C-terminal domain. The tract at residues 562 to 591 (GRSHQVQLKKRKKEQKRERPAKRRKIPAKR) is disordered. Residues 568–591 (QLKKRKKEQKRERPAKRRKIPAKR) are compositionally biased toward basic residues.

This sequence belongs to the DEAD box helicase family. DDX31/DBP7 subfamily. As to expression, expressed in flowers and pollen grains.

The protein resides in the nucleus. It catalyses the reaction ATP + H2O = ADP + phosphate + H(+). In terms of biological role, may play a role in organellar ribosome biogenesis and suppress 16S rRNA maturation. The chain is DEAD-box ATP-dependent RNA helicase 17 from Oryza sativa subsp. japonica (Rice).